We begin with the raw amino-acid sequence, 468 residues long: Mothers against decapentaplegic homolog 1 (468 aa).

An N-acetylmethionine modification is found at Met1. An MH1 domain is found at Pro12–Pro136. Zn(2+) is bound by residues Cys64, Cys109, Cys121, and His126. A disordered region spans residues Asn162–Met246. Residues Pro188–Ser210 show a composition bias toward low complexity. A compositionally biased stretch (pro residues) spans Asp221–Asp232. Residues Asp237–Met246 show a composition bias toward polar residues. One can recognise an MH2 domain in the interval Trp274 to Ser468. Position 325 is a phosphothreonine; by MINK1, TNIK and MAP4K4 (Thr325). Positions Lys421–Asp431 are L3 loop. Phosphoserine occurs at positions 466 and 468.

Belongs to the dwarfin/SMAD family. Found in a complex with SMAD4 and YY1. Interacts with HGS, NANOG and ZCCHC12. Upon C-terminus phosphorylation: forms trimers with another SMAD1 and the co-SMAD SMAD4. Interacts with PEBP2-alpha subunit, CREB-binding protein (CBP), p300, SMURF1, SMURF2, USP15 and HOXC8. Associates with ZNF423 or ZNF521 in response to BMP2 leading to activate transcription of BMP target genes. Interacts with SKOR1. Interacts (via MH2 domain) with LEMD3. Binding to LEMD3 results in at least a partial reduction of receptor-mediated phosphorylation. Forms a ternary complex with PSMB4 and OAZ1 before PSMB4 is incorporated into the 20S proteasome. Interacts (via MH2 domain) with FAM83G (via MH2 domain); in a SMAD4-independent manner. Interacts with ZC3H3. Interacts with TMEM119. Interacts (via MH1 and MH2 domains) with ZNF8. Interacts with RANBP3L; the interaction increases when SMAD1 is not phosphorylated and mediates SMAD1 nuclear export. Interacts with EGR1; this interaction inhibits SMAD1 dephosphorylation. Interacts with SMAD6. Interacts with YAP1. Interacts with MTMR4; negatively regulates BMP signaling through SMAD1 dephosphorylation and retention in endosomes. Post-translationally, phosphorylation of the C-terminal SVS motif by BMP type 1 receptor kinase activates SMAD1 by promoting dissociation from the receptor and trimerization with SMAD4. Phosphorylation by ERK2 MAP kinase in response to EGF or HGF prevents SMAD1 nuclear accumulation and transcriptional activity in response to BMP. Dephosphorylation, probably by PPM1A, induces its export from the nucleus to the cytoplasm. Dephosphorylation is inhibited by association with EGR1. Phosphorylation by CDK8/9 creates binding sites for YAP1, and subsequent phosphorylation by GSK3 switches off YAP1 binding and adds binding sites for SMURF1. Ubiquitinated by SMAD-specific E3 ubiquitin ligase SMURF1, leading to its degradation. Monoubiquitinated, leading to prevent DNA-binding. Deubiquitination by USP15 alleviates inhibition and promotes activation of TGF-beta target genes. Dephosphorylation, probably by PPM1A, induces its export from the nucleus to the cytoplasm. Phospho-SMAD1 is ubiquitinated by CHIP leading to disruption of the SMAD1-SMAD4 complex. As to expression, ubiquitous; present in liver, lung, stomach and spleen with lower level in heart, testes and skeletal muscle.

The protein localises to the cytoplasm. The protein resides in the nucleus. Transcriptional modulator that plays a role in various cellular processes, including embryonic development, cell differentiation, and tissue homeostasis. Upon BMP ligand binding to their receptors at the cell surface, is phosphorylated by activated type I BMP receptors (BMPRIs) and associates with SMAD4 to form an heteromeric complex which translocates into the nucleus acting as transcription factor. In turn, the hetero-trimeric complex recognizes cis-regulatory elements containing Smad Binding Elements (SBEs) to modulate the outcome of the signaling network. SMAD1/OAZ1/PSMB4 complex mediates the degradation of the CREBBP/EP300 repressor SNIP1. Positively regulates BMP4-induced expression of odontogenic development regulator MSX1 following IPO7-mediated nuclear import. This Rattus norvegicus (Rat) protein is Mothers against decapentaplegic homolog 1 (Smad1).